Here is a 521-residue protein sequence, read N- to C-terminus: Bifunctional purine biosynthesis protein PurH (521 aa).

Positions 1 to 147 (MGEITRALIS…KNWEGVTVLV (147 aa)) constitute an MGS-like domain.

Belongs to the PurH family.

It carries out the reaction (6R)-10-formyltetrahydrofolate + 5-amino-1-(5-phospho-beta-D-ribosyl)imidazole-4-carboxamide = 5-formamido-1-(5-phospho-D-ribosyl)imidazole-4-carboxamide + (6S)-5,6,7,8-tetrahydrofolate. The catalysed reaction is IMP + H2O = 5-formamido-1-(5-phospho-D-ribosyl)imidazole-4-carboxamide. It participates in purine metabolism; IMP biosynthesis via de novo pathway; 5-formamido-1-(5-phospho-D-ribosyl)imidazole-4-carboxamide from 5-amino-1-(5-phospho-D-ribosyl)imidazole-4-carboxamide (10-formyl THF route): step 1/1. The protein operates within purine metabolism; IMP biosynthesis via de novo pathway; IMP from 5-formamido-1-(5-phospho-D-ribosyl)imidazole-4-carboxamide: step 1/1. This Acidithiobacillus ferrooxidans (strain ATCC 53993 / BNL-5-31) (Leptospirillum ferrooxidans (ATCC 53993)) protein is Bifunctional purine biosynthesis protein PurH.